The primary structure comprises 199 residues: Ribonuclease HII (199 aa).

An RNase H type-2 domain is found at 10 to 199 (HLVAGVDEVG…VKRALGLASN (190 aa)). Positions 16, 17, and 108 each coordinate a divalent metal cation.

The protein belongs to the RNase HII family. Mn(2+) serves as cofactor. Requires Mg(2+) as cofactor.

Its subcellular location is the cytoplasm. It catalyses the reaction Endonucleolytic cleavage to 5'-phosphomonoester.. Functionally, endonuclease that specifically degrades the RNA of RNA-DNA hybrids. This chain is Ribonuclease HII, found in Klebsiella pneumoniae subsp. pneumoniae (strain ATCC 700721 / MGH 78578).